Reading from the N-terminus, the 947-residue chain is Translation initiation factor IF-2 (947 aa).

The tract at residues 69–353 is disordered; sequence RRRKEVPQEE…TPKPQKKTEV (285 aa). Residues 81-108 are compositionally biased toward low complexity; that stretch reads APPAAAEEPSSVDTAVAEEAPAEEVQPV. Residues 139-155 are compositionally biased toward acidic residues; that stretch reads PVVEEVIAEPAVEEVVE. Basic and acidic residues-rich tracts occupy residues 215 to 226 and 246 to 262; these read VTKEKPKVEKAT and KRQE…ERPK. A compositionally biased stretch (low complexity) spans 264 to 284; it reads AKPSGGPAPRAKEAAPQAAVP. The span at 327 to 337 shows a compositional bias: basic and acidic residues; it reads QVYEPERDERR. Residues 338–348 are compositionally biased toward basic residues; sequence MRRGKKTPKPQ. The tr-type G domain maps to 447 to 616; it reads PRPPVVTIMG…LLQAEVLELK (170 aa). Positions 456-463 are G1; that stretch reads GHVDHGKT. 456–463 serves as a coordination point for GTP; that stretch reads GHVDHGKT. The interval 481–485 is G2; the sequence is GITQH. The G3 stretch occupies residues 502–505; the sequence is DTPG. GTP is bound by residues 502-506 and 556-559; these read DTPGH and NKMD. The segment at 556–559 is G4; the sequence is NKMD. Residues 592–594 are G5; that stretch reads SAK.

This sequence belongs to the TRAFAC class translation factor GTPase superfamily. Classic translation factor GTPase family. IF-2 subfamily.

The protein localises to the cytoplasm. Its function is as follows. One of the essential components for the initiation of protein synthesis. Protects formylmethionyl-tRNA from spontaneous hydrolysis and promotes its binding to the 30S ribosomal subunits. Also involved in the hydrolysis of GTP during the formation of the 70S ribosomal complex. This Syntrophotalea carbinolica (strain DSM 2380 / NBRC 103641 / GraBd1) (Pelobacter carbinolicus) protein is Translation initiation factor IF-2.